Here is a 117-residue protein sequence, read N- to C-terminus: Large ribosomal subunit protein bL19 (117 aa).

It belongs to the bacterial ribosomal protein bL19 family.

This protein is located at the 30S-50S ribosomal subunit interface and may play a role in the structure and function of the aminoacyl-tRNA binding site. In Exiguobacterium sp. (strain ATCC BAA-1283 / AT1b), this protein is Large ribosomal subunit protein bL19.